Here is a 171-residue protein sequence, read N- to C-terminus: tRNA-specific adenosine deaminase (171 aa).

The CMP/dCMP-type deaminase domain maps to 6-133 (EEQTYFMQEA…ERLNHRVQVE (128 aa)). Zn(2+) is bound at residue His-57. Residue Glu-59 is the Proton donor of the active site. Zn(2+) contacts are provided by Cys-87 and Cys-90.

This sequence belongs to the cytidine and deoxycytidylate deaminase family. As to quaternary structure, homodimer. Zn(2+) serves as cofactor.

The catalysed reaction is adenosine(34) in tRNA + H2O + H(+) = inosine(34) in tRNA + NH4(+). Catalyzes the deamination of adenosine to inosine at the wobble position 34 of tRNA(Arg2). This is tRNA-specific adenosine deaminase from Streptococcus pyogenes serotype M1.